Consider the following 290-residue polypeptide: HTH-type transcriptional activator RhaR (290 aa).

The HTH araC/xylS-type domain occupies Asp179–Arg277. 2 DNA-binding regions (H-T-H motif) span residues Ala196 to Thr217 and Ile244 to Ala267.

Binds DNA as a dimer.

It localises to the cytoplasm. Functionally, activates expression of the rhaSR operon in response to L-rhamnose. The protein is HTH-type transcriptional activator RhaR of Yersinia pseudotuberculosis serotype O:3 (strain YPIII).